The primary structure comprises 446 residues: Inward rectifier potassium channel 4 (446 aa).

Residues 1 to 55 lie on the Cytoplasmic side of the membrane; that stretch reads MHGHSRNGQAHVPRRKRRNRFVKKNGQCNVYFANLSNKSQRYMADIFTTCVDTRW. The helical transmembrane segment at 56-80 threads the bilayer; it reads RYMLMIFSAAFLVSWLFFGLLFWCI. At 81 to 120 the chain is on the extracellular side; sequence AFFHGDLEPSPSGPTAGGPGGNGGGAAPTAAKPCIMHVNG. The interval 91 to 111 is val/Gly/Ala/Pro stretch; the sequence is PSGPTAGGPGGNGGGAAPTAA. The segment at residues 121–132 is an intramembrane region (helical; Pore-forming); sequence FLGAFLFSVETQ. Positions 133–139 form an intramembrane region, pore-forming; sequence TTIGYGF. Positions 134–139 match the Selectivity filter motif; that stretch reads TIGYGF. The Extracellular segment spans residues 140–148; sequence RCVTEECPL. The helical transmembrane segment at 149–170 threads the bilayer; it reads AVIAVVVQSIVGCVIDSFMIGT. The Cytoplasmic segment spans residues 171–446; the sequence is IMAKMPRPKK…NISYRRESAI (276 aa). The PDZ-binding signature appears at 444–446; that stretch reads SAI.

It belongs to the inward rectifier-type potassium channel (TC 1.A.2.1) family. KCNJ4 subfamily. Homomultimeric and heteromultimeric association with KCNJ2 and KCNJ12. Interacts with DLG2 and DLG4. Associates, via its PDZ-recognition domain, with a complex containing LIN7A, LIN7B, LIN7C, DLG1, CASK and APBA1. Interacts with TAX1BP3. TAX1BP3 competes with LIN7 family members for KCNJ4 binding. Detected in kidney distal convoluted tubules (at protein level). Widely expressed throughout the brain. Also found in some peripheral tissues.

Its subcellular location is the cell membrane. It is found in the cytoplasmic vesicle membrane. It localises to the postsynaptic cell membrane. It carries out the reaction K(+)(in) = K(+)(out). Its function is as follows. Inward rectifier potassium channels are characterized by a greater tendency to allow potassium to flow into the cell rather than out of it. Their voltage dependence is regulated by the concentration of extracellular potassium; as external potassium is raised, the voltage range of the channel opening shifts to more positive voltages. The inward rectification is mainly due to the blockage of outward current by internal magnesium. Can be blocked by extracellular barium and cesium. This is Inward rectifier potassium channel 4 (Kcnj4) from Rattus norvegicus (Rat).